The following is a 284-amino-acid chain: Putative cysteine-rich repeat secretory protein 7 (284 aa).

The first 24 residues, 1-24 (MARIILTAPLFYFFFSLLSHQTMS), serve as a signal peptide directing secretion. 2 consecutive Gnk2-homologous domains span residues 26 to 128 (PQHM…NVSF) and 134 to 244 (SKPV…TFVL). The tract at residues 247–284 (PAPSPSSLPPISPTSSPPLSLPPQLPPPLSQPPPPLST) is disordered.

The protein belongs to the cysteine-rich repeat secretory protein family.

Its subcellular location is the secreted. The polypeptide is Putative cysteine-rich repeat secretory protein 7 (CRRSP7) (Arabidopsis thaliana (Mouse-ear cress)).